The chain runs to 493 residues: Glutamyl-tRNA(Gln) amidotransferase subunit A (493 aa).

Active-site charge relay system residues include Lys78 and Ser158. Ser182 acts as the Acyl-ester intermediate in catalysis.

The protein belongs to the amidase family. GatA subfamily. In terms of assembly, heterotrimer of A, B and C subunits.

The catalysed reaction is L-glutamyl-tRNA(Gln) + L-glutamine + ATP + H2O = L-glutaminyl-tRNA(Gln) + L-glutamate + ADP + phosphate + H(+). In terms of biological role, allows the formation of correctly charged Gln-tRNA(Gln) through the transamidation of misacylated Glu-tRNA(Gln) in organisms which lack glutaminyl-tRNA synthetase. The reaction takes place in the presence of glutamine and ATP through an activated gamma-phospho-Glu-tRNA(Gln). In Methylorubrum extorquens (strain PA1) (Methylobacterium extorquens), this protein is Glutamyl-tRNA(Gln) amidotransferase subunit A.